Here is a 181-residue protein sequence, read N- to C-terminus: UPF0398 protein LMOf2365_1918 (181 aa).

The protein belongs to the UPF0398 family.

The sequence is that of UPF0398 protein LMOf2365_1918 from Listeria monocytogenes serotype 4b (strain F2365).